The following is a 571-amino-acid chain: MRTSKYLLSTLKETPNDAEVVSHQLMLRAGMIRRLASGLYTWLPTGLRVLRKVENIVRQEIDNAGAIETLMPVVQPFELWEETGRSEKMGPELLRFTDRHVRPFVLSPTAEEVITSLVRNEVSSYKQLPLNLYQIQTKFRDERRPRFGVMRAREFCMMDAYSFDIDKEGLQKSYDAMHDAYCKAFDRMGLEYRPVLADSGAIGGSGSQEFHVLAESGEDLIAFSTESDYAANIEKAEAVAPTAERAAPTQEMTTVDTPNAKTIAELVEQHGIAIEKTVKTLFVKASDDVDADIIALIIRGDHELNEVKAENLPQVASPLEMADEAQLRDLIGAGAGSLGPVGLELPFIVDRSVAVMSDFGTGANIDGKHFFGVNWDRDVQLGQVEDLRNVVEGDPSPCGKGTLQLKRGIEVGHIFQLGTAYSEAMNCGVLDANGKNVILEMGCYGIGVSRVVASAIEQNNDEYGIVWPEAIAPFTVAIVPMNMHKSERVKEAAEKLYAELTAMGIEVLFDDRKERPGVMFKDIELIGIPHTIVIGDRSMDEGNFEYKNRRANTKEAVEMANIVEHIKAQLS.

It belongs to the class-II aminoacyl-tRNA synthetase family. ProS type 1 subfamily. Homodimer.

Its subcellular location is the cytoplasm. The catalysed reaction is tRNA(Pro) + L-proline + ATP = L-prolyl-tRNA(Pro) + AMP + diphosphate. In terms of biological role, catalyzes the attachment of proline to tRNA(Pro) in a two-step reaction: proline is first activated by ATP to form Pro-AMP and then transferred to the acceptor end of tRNA(Pro). As ProRS can inadvertently accommodate and process non-cognate amino acids such as alanine and cysteine, to avoid such errors it has two additional distinct editing activities against alanine. One activity is designated as 'pretransfer' editing and involves the tRNA(Pro)-independent hydrolysis of activated Ala-AMP. The other activity is designated 'posttransfer' editing and involves deacylation of mischarged Ala-tRNA(Pro). The misacylated Cys-tRNA(Pro) is not edited by ProRS. The polypeptide is Proline--tRNA ligase (Aliivibrio fischeri (strain MJ11) (Vibrio fischeri)).